The chain runs to 426 residues: Glucose-6-phosphate isomerase (426 aa).

Residue Glu-282 is the Proton donor of the active site. Catalysis depends on residues His-303 and Lys-417.

It belongs to the GPI family.

Its subcellular location is the cytoplasm. It catalyses the reaction alpha-D-glucose 6-phosphate = beta-D-fructose 6-phosphate. Its pathway is carbohydrate biosynthesis; gluconeogenesis. The protein operates within carbohydrate degradation; glycolysis; D-glyceraldehyde 3-phosphate and glycerone phosphate from D-glucose: step 2/4. Catalyzes the reversible isomerization of glucose-6-phosphate to fructose-6-phosphate. The polypeptide is Glucose-6-phosphate isomerase (Onion yellows phytoplasma (strain OY-M)).